The following is a 452-amino-acid chain: MLRVGRIGTKTLASSSLRFVAGARPKSTLTEAVLETTGLLKTTPQNPEWSGAVKQASRLVETDTPIRDPFSIVSQEMSTLANNIGSLIGSGHPTLNKVATYYFQSEGKHVRPLIVLLLSRALSAIPESERDRGTFDASDVTENVGELNPEPSINDPLSPIEILHGINPDIVLNPLSRPSDPLPYESNGILPKQRRLAEIVEMIHTASLLHDDVIDNSATRRGSPTGNVAFGNKMAILAGDFLLGRASVAIARLRNAEVIELLSTTIANLVEGEFMQLKNTIVDNSEIANKATFEYYIHKTYLKTASLMSKSCRAAAVLSGARNPIVDASYKFGKNLGLCFQVVDDMLDYSEGESHLGKPAGADLKLGLATAPVLFAWEKYPELGDMIKRKFDGPGDVERARFLVQQADGLSRTRELAQKYCDEAVANLDLLPYSESREALRNLTMKMMNRSK.

Positions 108, 111, and 204 each coordinate isopentenyl diphosphate. Mg(2+) is bound by residues Asp-211 and Asp-215. Arg-220 lines the an all-trans-polyprenyl diphosphate pocket. Residue Arg-221 participates in isopentenyl diphosphate binding. The an all-trans-polyprenyl diphosphate site is built by Lys-303, Thr-304, Gln-341, and Lys-358.

This sequence belongs to the FPP/GGPP synthase family. Requires Mg(2+) as cofactor.

The protein localises to the mitochondrion. Its pathway is cofactor biosynthesis; ubiquinone biosynthesis. In terms of biological role, assembly of polyisoprenoid side chains. The polyprenyl synthase of coenzyme Q biosynthesis catalyzes the formation from isopentenyl diphosphate of all trans-polyprenyl pyrophosphates generally ranging in length of between 6 and 10 isoprene units depending on the species. The protein is Probable hexaprenyl pyrophosphate synthase, mitochondrial (COQ1) of Yarrowia lipolytica (strain CLIB 122 / E 150) (Yeast).